Reading from the N-terminus, the 360-residue chain is DNA replication and repair protein RecF (360 aa).

ATP is bound at residue 30 to 37 (GHNGSGKT).

The protein belongs to the RecF family.

The protein localises to the cytoplasm. Its function is as follows. The RecF protein is involved in DNA metabolism; it is required for DNA replication and normal SOS inducibility. RecF binds preferentially to single-stranded, linear DNA. It also seems to bind ATP. In Shewanella pealeana (strain ATCC 700345 / ANG-SQ1), this protein is DNA replication and repair protein RecF.